The following is a 241-amino-acid chain: MLFNSLLTNFAALEVGQHLYWQIGNIRLHGQVFLTSWILLGALLVFISLGTKKMENDPKGLQNLLEFLWDYIRDLARTQIGEKVYRDWMPFIGTLFLFVFVSNWGGALIPWRLIKLPSGELGAPTADINTTIALALLVSLSYFYAGLSNKGWRYFEYYVHPTPIMLPFKILEDFTKPLSLSFRLFGNILADELVVGVLVFLVPLILPIPVMFLGLFTSAIQALIFATLAAYYIGEAVEEHH.

The next 5 helical transmembrane spans lie at 30-50, 91-111, 128-148, 193-213, and 214-234; these read GQVFLTSWILLGALLVFISLG, FIGTLFLFVFVSNWGGALIPW, INTTIALALLVSLSYFYAGLS, LVVGVLVFLVPLILPIPVMFL, and GLFTSAIQALIFATLAAYYIG.

Belongs to the ATPase A chain family. F-type ATPases have 2 components, CF(1) - the catalytic core - and CF(0) - the membrane proton channel. CF(1) has five subunits: alpha(3), beta(3), gamma(1), delta(1), epsilon(1). CF(0) has four main subunits: a, b, b' and c.

Its subcellular location is the cellular thylakoid membrane. Key component of the proton channel; it plays a direct role in the translocation of protons across the membrane. This chain is ATP synthase subunit a, found in Prochlorococcus marinus (strain MIT 9312).